The following is a 211-amino-acid chain: Uracil phosphoribosyltransferase (211 aa).

5-phospho-alpha-D-ribose 1-diphosphate-binding positions include R78, R103, and 130–138 (DPMLATGNS). Residues I193 and 198–200 (GDA) contribute to the uracil site. D199 is a 5-phospho-alpha-D-ribose 1-diphosphate binding site.

Belongs to the UPRTase family. The cofactor is Mg(2+).

The enzyme catalyses UMP + diphosphate = 5-phospho-alpha-D-ribose 1-diphosphate + uracil. It participates in pyrimidine metabolism; UMP biosynthesis via salvage pathway; UMP from uracil: step 1/1. Allosterically activated by GTP. Its function is as follows. Catalyzes the conversion of uracil and 5-phospho-alpha-D-ribose 1-diphosphate (PRPP) to UMP and diphosphate. The chain is Uracil phosphoribosyltransferase from Acinetobacter baumannii (strain AB307-0294).